Consider the following 372-residue polypeptide: Glutamate 5-kinase (372 aa).

K14 contacts ATP. Positions 54, 141, and 153 each coordinate substrate. 173–174 is an ATP binding site; sequence TD. Residues 280–358 enclose the PUA domain; it reads RGRVVIDAGA…SEIESVLGHL (79 aa).

The protein belongs to the glutamate 5-kinase family.

The protein resides in the cytoplasm. It carries out the reaction L-glutamate + ATP = L-glutamyl 5-phosphate + ADP. The protein operates within amino-acid biosynthesis; L-proline biosynthesis; L-glutamate 5-semialdehyde from L-glutamate: step 1/2. In terms of biological role, catalyzes the transfer of a phosphate group to glutamate to form L-glutamate 5-phosphate. The chain is Glutamate 5-kinase from Cupriavidus pinatubonensis (strain JMP 134 / LMG 1197) (Cupriavidus necator (strain JMP 134)).